The sequence spans 389 residues: Naringenin-chalcone synthase (389 aa).

Residue cysteine 164 is part of the active site.

It belongs to the thiolase-like superfamily. Chalcone/stilbene synthases family. As to expression, expressed in glandular trichomes. Detected at low levels in female flowers, stems, seeds, leaves and roots.

It localises to the cytoplasm. The catalysed reaction is (E)-4-coumaroyl-CoA + 3 malonyl-CoA + 3 H(+) = 2',4,4',6'-tetrahydroxychalcone + 3 CO2 + 4 CoA. In terms of biological role, chalcone synthase that can also use isovaleryl-CoA, isobutyryl-CoA or hexanoyl-CoA as substrates, but that is unable to produce olivetol or olivetolic acid. In Cannabis sativa (Hemp), this protein is Naringenin-chalcone synthase (CHS).